The following is a 719-amino-acid chain: Probable 1-deoxy-D-xylulose-5-phosphate synthase, chloroplastic (719 aa).

A chloroplast-targeting transit peptide spans 1–57 (MALCAYAFPGILNRTVAVASDASKPTPLFSEWIHGTDLQFQFHQKLTQVKKRSRTVQ). Residues H145 and 186 to 188 (GHS) contribute to the thiamine diphosphate site. A Mg(2+)-binding site is contributed by D217. Residues 218–219 (GA), N246, Y367, and E449 each bind thiamine diphosphate. A Mg(2+)-binding site is contributed by N246.

Belongs to the transketolase family. DXPS subfamily. Homodimer. It depends on Mg(2+) as a cofactor. Requires thiamine diphosphate as cofactor.

The protein localises to the plastid. It localises to the chloroplast. The enzyme catalyses D-glyceraldehyde 3-phosphate + pyruvate + H(+) = 1-deoxy-D-xylulose 5-phosphate + CO2. The protein operates within metabolic intermediate biosynthesis; 1-deoxy-D-xylulose 5-phosphate biosynthesis; 1-deoxy-D-xylulose 5-phosphate from D-glyceraldehyde 3-phosphate and pyruvate: step 1/1. Its function is as follows. Catalyzes the acyloin condensation reaction between C atoms 2 and 3 of pyruvate and glyceraldehyde 3-phosphate to yield 1-deoxy-D-xylulose-5-phosphate (DXP). The chain is Probable 1-deoxy-D-xylulose-5-phosphate synthase, chloroplastic (TKT2) from Capsicum annuum (Capsicum pepper).